The sequence spans 81 residues: Acyl carrier protein (81 aa).

One can recognise a Carrier domain in the interval 4-79 (SEIFGKVKDI…AAVDFIAGKV (76 aa)). The residue at position 39 (Ser39) is an O-(pantetheine 4'-phosphoryl)serine.

Belongs to the acyl carrier protein (ACP) family. 4'-phosphopantetheine is transferred from CoA to a specific serine of apo-ACP by AcpS. This modification is essential for activity because fatty acids are bound in thioester linkage to the sulfhydryl of the prosthetic group.

The protein resides in the cytoplasm. Its pathway is lipid metabolism; fatty acid biosynthesis. Its function is as follows. Carrier of the growing fatty acid chain in fatty acid biosynthesis. This Acaryochloris marina (strain MBIC 11017) protein is Acyl carrier protein.